A 553-amino-acid chain; its full sequence is 5'-nucleotidase (553 aa).

The N-terminal stretch at 1–21 (MKQRLIVKTALSAAILATLAG) is a signal peptide. Cys-22 carries the N-palmitoyl cysteine lipid modification. A lipid anchor (S-diacylglycerol cysteine) is attached at Cys-22. A divalent metal cation-binding residues include Asp-45, His-47, Asp-88, Asn-120, His-221, His-256, and Gln-258. Substrate contacts are provided by residues Phe-432 and 501–507 (YNAAGGD).

It belongs to the 5'-nucleotidase family. Chloride is required as a cofactor. It depends on Mg(2+) as a cofactor.

It localises to the cell outer membrane. The catalysed reaction is a ribonucleoside 5'-phosphate + H2O = a ribonucleoside + phosphate. Functionally, degradation of extracellular 5'-nucleotides for nutritional needs. This Vibrio vulnificus (strain CMCP6) protein is 5'-nucleotidase (nutA).